The chain runs to 555 residues: 2-succinyl-5-enolpyruvyl-6-hydroxy-3-cyclohexene-1-carboxylate synthase (555 aa).

This sequence belongs to the TPP enzyme family. MenD subfamily. In terms of assembly, homodimer. It depends on Mg(2+) as a cofactor. Mn(2+) is required as a cofactor. The cofactor is thiamine diphosphate.

The enzyme catalyses isochorismate + 2-oxoglutarate + H(+) = 5-enolpyruvoyl-6-hydroxy-2-succinyl-cyclohex-3-ene-1-carboxylate + CO2. The protein operates within quinol/quinone metabolism; 1,4-dihydroxy-2-naphthoate biosynthesis; 1,4-dihydroxy-2-naphthoate from chorismate: step 2/7. Its pathway is quinol/quinone metabolism; menaquinone biosynthesis. Functionally, catalyzes the thiamine diphosphate-dependent decarboxylation of 2-oxoglutarate and the subsequent addition of the resulting succinic semialdehyde-thiamine pyrophosphate anion to isochorismate to yield 2-succinyl-5-enolpyruvyl-6-hydroxy-3-cyclohexene-1-carboxylate (SEPHCHC). This chain is 2-succinyl-5-enolpyruvyl-6-hydroxy-3-cyclohexene-1-carboxylate synthase, found in Kineococcus radiotolerans (strain ATCC BAA-149 / DSM 14245 / SRS30216).